A 373-amino-acid chain; its full sequence is Extensin-1 (373 aa).

The signal sequence occupies residues 1-19 (MASFLVLAFSLAFVSQTTA). 36 consecutive repeat copies span residues 25 to 33 (SPPPPVKHY), 34 to 40 (SPPPVYK), 41 to 49 (SPPPPVKHY), 50 to 56 (SPPPVYK), 57 to 65 (SPPPPVKHY), 66 to 72 (SPPPVYK), 73 to 81 (SPPPPVKYY), 82 to 88 (SPPPVYK), 97 to 105 (SPPPPVKHY), 106 to 112 (SPPPVYK), 113 to 121 (SPPPPVKHY), 122 to 128 (SPPPVYK), 129 to 137 (SPPPPVKHY), 138 to 144 (SPPPVYK), 145 to 153 (SPPPPVKHY), 154 to 160 (SPPPVYK), 161 to 169 (SPPPPVKYY), 170 to 176 (SPPPVYK), 177 to 185 (SPPPPVKHY), 186 to 192 (SPPPVYK), 193 to 201 (SPPPPVKYY), 202 to 208 (SPPPVYK), 209 to 217 (SPPPPVKHY), 218 to 224 (SPPPVYK), 225 to 233 (SPPPPVKYY), 234 to 240 (SPPPVYK), 241 to 248 (SPPPPVHY), 249 to 256 (SPPPVVYH), 257 to 264 (SPPPPVHY), 265 to 272 (SPPPVVYH), 273 to 280 (SPPPPVHY), 281 to 288 (SPPPVVYH), 289 to 296 (SPPPPVHY), 297 to 304 (SPPPVVYH), 305 to 312 (SPPPPVHY), and 313 to 320 (SPPPVVYH). The 13 X 9 AA repeats of S-P-P-P-P-V-K-[HY]-Y stretch occupies residues 25–233 (SPPPPVKHYS…KSPPPPVKYY (209 aa)). The 13 X 7 AA repeats of S-P-P-P-V-Y-K stretch occupies residues 34-240 (SPPPVYKSPP…KYYSPPPVYK (207 aa)). The interval 241-312 (SPPPPVHYSP…YHSPPPPVHY (72 aa)) is 5 X 8 AA repeats of S-P-P-P-P-V-H-Y. The interval 249–320 (SPPPVVYHSP…HYSPPPVVYH (72 aa)) is 5 X 8 AA repeats of S-P-P-P-V-V-Y-H. Isodityrosine cross-linking stretches follow at residues 329-332 (YEYK) and 363-366 (YLYK). The disordered stretch occupies residues 349–373 (PPPPVHHYSPPHQPYLYKSPPPPHY).

It belongs to the extensin family. Extensins contain a characteristic repeat of the pentapeptide Ser-Pro(4). For this particular extensin, a typical repeat of Ser-Pro(3) is found. In both cases, the proline residues are hydroxylated and then O-glycosylated (arabinosylation). In terms of processing, synthetised as soluble proteins which become insolubilised in the cell wall through the intermolecular cross-linking of Tyr on adjacent monomers. Isodityrosine (IDT) stabilizes and makes rigid the part of the polypeptide where IDT functional sites are present. Predominantly expressed in the roots. Not detected in the leaves, nor in flowers or flower buds. Wounding reverses this pattern, turning on the gene in the leaves and repressing it in the roots.

It is found in the secreted. It localises to the primary cell wall. Structural component which strengthens the primary cell wall. In Arabidopsis thaliana (Mouse-ear cress), this protein is Extensin-1.